The following is a 270-amino-acid chain: uncharacterized protein (270 aa).

This is an uncharacterized protein from Escherichia coli (strain K12).